The sequence spans 249 residues: Small ribosomal subunit protein uS2 (249 aa).

Belongs to the universal ribosomal protein uS2 family.

The sequence is that of Small ribosomal subunit protein uS2 from Acinetobacter baylyi (strain ATCC 33305 / BD413 / ADP1).